Consider the following 213-residue polypeptide: ATP phosphoribosyltransferase (213 aa).

It belongs to the ATP phosphoribosyltransferase family. Short subfamily. In terms of assembly, heteromultimer composed of HisG and HisZ subunits.

The protein resides in the cytoplasm. The catalysed reaction is 1-(5-phospho-beta-D-ribosyl)-ATP + diphosphate = 5-phospho-alpha-D-ribose 1-diphosphate + ATP. The protein operates within amino-acid biosynthesis; L-histidine biosynthesis; L-histidine from 5-phospho-alpha-D-ribose 1-diphosphate: step 1/9. Functionally, catalyzes the condensation of ATP and 5-phosphoribose 1-diphosphate to form N'-(5'-phosphoribosyl)-ATP (PR-ATP). Has a crucial role in the pathway because the rate of histidine biosynthesis seems to be controlled primarily by regulation of HisG enzymatic activity. The protein is ATP phosphoribosyltransferase of Teredinibacter turnerae (strain ATCC 39867 / T7901).